A 408-amino-acid polypeptide reads, in one-letter code: RNA-splicing ligase RtcB (408 aa).

Residues aspartate 75, cysteine 78, histidine 168, histidine 185, and histidine 281 each coordinate Mn(2+). Position 167-171 (167-171) interacts with GMP; that stretch reads NHFIE. GMP is bound by residues 281-282, 313-316, serine 320, 337-340, and lysine 407; these read HN, PGSM, and HGAG. Histidine 337 functions as the GMP-histidine intermediate in the catalytic mechanism.

The protein belongs to the RtcB family. In terms of assembly, monomer. The cofactor is Mn(2+).

The enzyme catalyses a 3'-end 3'-phospho-ribonucleotide-RNA + a 5'-end dephospho-ribonucleoside-RNA + GTP = a ribonucleotidyl-ribonucleotide-RNA + GMP + diphosphate. The catalysed reaction is a 3'-end 2',3'-cyclophospho-ribonucleotide-RNA + a 5'-end dephospho-ribonucleoside-RNA + GTP + H2O = a ribonucleotidyl-ribonucleotide-RNA + GMP + diphosphate + H(+). In terms of biological role, GTP-dependent RNA ligase that is involved in RNA repair. Joins RNA with 2',3'-cyclic-phosphate or 3'-phosphate ends to RNA with 5'-hydroxy ends. Also acts as a DNA ligase in case of DNA damage by splicing 'dirty' DNA breaks, characterized by 3'-phosphate (or cyclic-phosphate) and 5'-hydroxy ends that cannot be sealed by classical DNA ligases. Repairs tRNA cleaved by colicins D or E5, does not repair damaged 16S rRNA. Functionally, able to catalyze tRNA splicing in vivo in yeast, but bacteria are not known to splice tRNA. This is RNA-splicing ligase RtcB from Escherichia coli (strain K12).